The sequence spans 293 residues: SAGA-associated factor 29 (293 aa).

Residues 3-88 (LVSADSRIAE…KALDKIAEIK (86 aa)) adopt a coiled-coil conformation. The SGF29 C-terminal domain occupies 152 to 293 (GDYVARPGDK…VVACKEPKKK (142 aa)). 2 histone H3K4me3 N-terminus binding regions span residues 194–196 (DID) and 240–243 (QTTC). The interval 264 to 266 (FED) is histone H3K4me3 binding. Position 288 is an N6-acetyllysine (Lys-288).

It belongs to the SGF29 family. In terms of assembly, interacts with dimethylated and trimethylated 'Lys-4' of histone H3 (H3K4me2 and H3K4me3), with a preference for the trimethylated form (H3K4me3). Component of some SAGA-type complexes. Component of the ADA2A-containing complex (ATAC), composed of KAT14, KAT2A, TADA2L, TADA3L, ZZ3, MBIP, WDR5, YEATS2, CCDC101 and DR1. Interacts with (methylated) CGAS. Interacts with TADA3L, GCN5L2, SUPT3H and MYC.

It is found in the nucleus. Chromatin reader component of some histone acetyltransferase (HAT) SAGA-type complexes like the TFTC-HAT, ATAC or STAGA complexes. SGF29 specifically recognizes and binds methylated 'Lys-4' of histone H3 (H3K4me), with a preference for trimethylated form (H3K4me3). In the SAGA-type complexes, SGF29 is required to recruit complexes to H3K4me. Involved in the response to endoplasmic reticulum (ER) stress by recruiting the SAGA complex to H3K4me, thereby promoting histone H3 acetylation and cell survival. Also binds non-histone proteins that are methylated on Lys residues: specifically recognizes and binds CGAS monomethylated on 'Lys-506'. This chain is SAGA-associated factor 29, found in Homo sapiens (Human).